Here is a 234-residue protein sequence, read N- to C-terminus: Phosphoribosylaminoimidazole-succinocarboxamide synthase (234 aa).

This sequence belongs to the SAICAR synthetase family.

The catalysed reaction is 5-amino-1-(5-phospho-D-ribosyl)imidazole-4-carboxylate + L-aspartate + ATP = (2S)-2-[5-amino-1-(5-phospho-beta-D-ribosyl)imidazole-4-carboxamido]succinate + ADP + phosphate + 2 H(+). It functions in the pathway purine metabolism; IMP biosynthesis via de novo pathway; 5-amino-1-(5-phospho-D-ribosyl)imidazole-4-carboxamide from 5-amino-1-(5-phospho-D-ribosyl)imidazole-4-carboxylate: step 1/2. In Staphylococcus aureus (strain COL), this protein is Phosphoribosylaminoimidazole-succinocarboxamide synthase.